A 193-amino-acid chain; its full sequence is Ion-translocating oxidoreductase complex subunit A (193 aa).

The next 6 helical transmembrane spans lie at 5–25 (LLLF…FLGL), 39–59 (MGMG…AWLI), 63–83 (ILIP…VIAV), 102–122 (LLGI…VALL), 134–154 (ALYG…FAAI), and 171–191 (AIAL…SGLV).

It belongs to the NqrDE/RnfAE family. The complex is composed of six subunits: RsxA, RsxB, RsxC, RsxD, RsxE and RsxG.

The protein resides in the cell inner membrane. In terms of biological role, part of a membrane-bound complex that couples electron transfer with translocation of ions across the membrane. Required to maintain the reduced state of SoxR. The polypeptide is Ion-translocating oxidoreductase complex subunit A (Escherichia fergusonii (strain ATCC 35469 / DSM 13698 / CCUG 18766 / IAM 14443 / JCM 21226 / LMG 7866 / NBRC 102419 / NCTC 12128 / CDC 0568-73)).